A 500-amino-acid chain; its full sequence is MTKKYVLALDQGTTSCRAILFDRDSNIVGVAQKEFTQHYPKPGWVEHDPEEIWSTQYGVIAELMARYNVNPEEIAAIGITNQRETTVVWDRNTGKPVYNAIVWQCRRTAGICDELKAKGLEEKVRYKTGLVIDAYFSGTKIKWILDNVEGAREKAERGELLFGTIDTWLVWKLTGGKVHVTDYSNASRTMIYNIRELKWDEELLAELGIPASMLPEVKPSSYVYGETDPNVFFGHAIPISGIAGDQQAALFGQTCFEPGMAKNTYGTGCFMLMNTGDKVYESKNGLLTTIAWGIDGKVEYALEGSIFIAGAVIQWLRDGLKLIESAADSEYFASKVPDTGGVYIVPAFAGLGAPYWDMRARGTIVGLTRGTNKYHLVRAALESMAYQTRDVLSAMEADSGIKLQALKVDGGAVANNLLMQFQADILGVPVERPVNIETTAMGAAYLAGLAVGFWADKQELVAKYKVSRRFEPTMDEQTREKLYKGWQRAVTRAREWEVEE.

Threonine 13 is a binding site for ADP. ATP contacts are provided by threonine 13, threonine 14, and serine 15. Residue threonine 13 participates in sn-glycerol 3-phosphate binding. An ADP-binding site is contributed by arginine 17. Sn-glycerol 3-phosphate is bound by residues arginine 83, glutamate 84, tyrosine 135, and aspartate 245. Glycerol contacts are provided by arginine 83, glutamate 84, tyrosine 135, aspartate 245, and glutamine 246. ADP is bound by residues threonine 267 and glycine 310. 4 residues coordinate ATP: threonine 267, glycine 310, glutamine 314, and glycine 411. ADP-binding residues include glycine 411 and asparagine 415.

The protein belongs to the FGGY kinase family. In terms of assembly, homotetramer and homodimer (in equilibrium).

The enzyme catalyses glycerol + ATP = sn-glycerol 3-phosphate + ADP + H(+). The protein operates within polyol metabolism; glycerol degradation via glycerol kinase pathway; sn-glycerol 3-phosphate from glycerol: step 1/1. With respect to regulation, activated by phosphorylation and inhibited by fructose 1,6-bisphosphate (FBP). Functionally, key enzyme in the regulation of glycerol uptake and metabolism. Catalyzes the phosphorylation of glycerol to yield sn-glycerol 3-phosphate. This is Glycerol kinase from Carboxydothermus hydrogenoformans (strain ATCC BAA-161 / DSM 6008 / Z-2901).